The chain runs to 31 residues: Kallikrein-1 (31 aa).

Positions 1–31 constitute a Peptidase S1 domain; sequence VIGGQECARDSHPWQAAVYHFSDIECGGVLV.

This sequence belongs to the peptidase S1 family. Kallikrein subfamily.

It catalyses the reaction Preferential cleavage of Arg-|-Xaa bonds in small molecule substrates. Highly selective action to release kallidin (lysyl-bradykinin) from kininogen involves hydrolysis of Met-|-Xaa or Leu-|-Xaa.. Its function is as follows. Glandular kallikreins cleave Met-Lys and Arg-Ser bonds in kininogen to release Lys-bradykinin. This chain is Kallikrein-1, found in Cavia porcellus (Guinea pig).